Consider the following 228-residue polypeptide: 30 kDa heat shock protein (228 aa).

3 disordered regions span residues 34 to 53 (EVQGSAPETGSRRHTQPTRT), 117 to 136 (KGEPHSPAAHHATVEDDVDE), and 144 to 174 (TATGANNQNNQQVAQRASAPTTEEKPKAPAE). The region spanning 49–228 (QPTRTFSPKF…KHETIRIAIN (180 aa)) is the sHSP domain. Low complexity predominate over residues 144–158 (TATGANNQNNQQVAQ).

This sequence belongs to the small heat shock protein (HSP20) family.

It is found in the cytoplasm. This Neurospora crassa (strain ATCC 24698 / 74-OR23-1A / CBS 708.71 / DSM 1257 / FGSC 987) protein is 30 kDa heat shock protein (hsp30).